We begin with the raw amino-acid sequence, 106 residues long: MLREECTPSSSWWEDVQHHHNDHANSISSTSFYHKSSNNNSHANASCEEDNLSVSTVRASNRLDLTAESSNHHSLSASNQPASSSDELLRDHVVSSHNHLWSLAFL.

Residues 24 to 35 show a composition bias toward polar residues; it reads ANSISSTSFYHK. 2 disordered regions span residues 24–49 and 65–87; these read ANSI…SCEE and LTAE…SSDE. Low complexity-rich tracts occupy residues 36 to 46 and 74 to 85; these read SSNNNSHANAS and SLSASNQPASSS.

This is an uncharacterized protein from Arabidopsis thaliana (Mouse-ear cress).